A 435-amino-acid polypeptide reads, in one-letter code: MQISVESVNSIKKKLNFEIPADKVSAEVDKAYAEIRKHAAIKGFRKGKVPMSLIEKHYGEKMAEDVVKNLVQESYFSAVSEQGLNPVGYPAIESDQLKKGEPFKYSATVEVFPEVEVKDYTGLEVVKEKLEVDDSVVAARLKEMQERMAQLGPAPEGHAAAMGDFVTFDFKGSIDGVYFEGGSAEDFQLELGSGRFIPGFEEQMVGMTVGTNSTIKVNFPEGYGNADLSGKPADFEVSVKEIKVKELPELNDDFAKEFGEEFETLDLLKAKLAEINETQEASRINAELRDRLIKALIEKNEIEVPEALVDRQVQMMLESTKQRLASQRLSLDMMGMTDDSYKAQFREAAREQVKGSLLLDAVAEKEKIEPTEEELEAQLSVIAEQTRQDLEKVAQLYKTNERAKDNLMAQMREDKAVKFILDRAKVTEVPKAEIK.

Residues 163–248 (GDFVTFDFKG…VKEIKVKELP (86 aa)) form the PPIase FKBP-type domain.

Belongs to the FKBP-type PPIase family. Tig subfamily.

The protein localises to the cytoplasm. The enzyme catalyses [protein]-peptidylproline (omega=180) = [protein]-peptidylproline (omega=0). In terms of biological role, involved in protein export. Acts as a chaperone by maintaining the newly synthesized protein in an open conformation. Functions as a peptidyl-prolyl cis-trans isomerase. The protein is Trigger factor of Geobacter sp. (strain M21).